A 707-amino-acid chain; its full sequence is Polyribonucleotide nucleotidyltransferase (707 aa).

Residues aspartate 486 and aspartate 492 each contribute to the Mg(2+) site. The KH domain maps to proline 553–isoleucine 612. An S1 motif domain is found at glycine 622–lysine 690.

It belongs to the polyribonucleotide nucleotidyltransferase family. As to quaternary structure, component of the RNA degradosome, which is a multiprotein complex involved in RNA processing and mRNA degradation. Requires Mg(2+) as cofactor.

Its subcellular location is the cytoplasm. The enzyme catalyses RNA(n+1) + phosphate = RNA(n) + a ribonucleoside 5'-diphosphate. Its function is as follows. Involved in mRNA degradation. Catalyzes the phosphorolysis of single-stranded polyribonucleotides processively in the 3'- to 5'-direction. The sequence is that of Polyribonucleotide nucleotidyltransferase from Edwardsiella ictaluri (strain 93-146).